Consider the following 119-residue polypeptide: MKRIAFVFSTVPHGTAAGREGLDALLATSALTDDLAVFFIADGVFQLLPGQKPDAVLARDYIATFKLLGLYDIEQCWVCAASLRERGLDPQTPFVVEATPLEADALRRELANYDVILRF.

It belongs to the DsrF/TusC family. As to quaternary structure, heterohexamer, formed by a dimer of trimers. The hexameric TusBCD complex contains 2 copies each of TusB, TusC and TusD. The TusBCD complex interacts with TusE.

The protein resides in the cytoplasm. Functionally, part of a sulfur-relay system required for 2-thiolation of 5-methylaminomethyl-2-thiouridine (mnm(5)s(2)U) at tRNA wobble positions. This Escherichia coli O45:K1 (strain S88 / ExPEC) protein is Protein TusC.